We begin with the raw amino-acid sequence, 504 residues long: Lysine--tRNA ligase (504 aa).

Residues E411 and E418 each contribute to the Mg(2+) site.

It belongs to the class-II aminoacyl-tRNA synthetase family. As to quaternary structure, homodimer. It depends on Mg(2+) as a cofactor.

It localises to the cytoplasm. The catalysed reaction is tRNA(Lys) + L-lysine + ATP = L-lysyl-tRNA(Lys) + AMP + diphosphate. This Clostridium botulinum (strain ATCC 19397 / Type A) protein is Lysine--tRNA ligase.